A 244-amino-acid polypeptide reads, in one-letter code: Probable transcriptional regulatory protein DNO_1179 (244 aa).

This sequence belongs to the TACO1 family.

It localises to the cytoplasm. This is Probable transcriptional regulatory protein DNO_1179 from Dichelobacter nodosus (strain VCS1703A).